The chain runs to 407 residues: Large ribosomal subunit protein uL3-like (407 aa).

Positions 1–31 (MSHRKFSAPRHGHLGFLPHKRSHRHRGKVKT) are enriched in basic residues. Disordered regions lie at residues 1 to 35 (MSHR…WPRD) and 383 to 407 (QEKR…SGDL). Over residues 394–407 (KHLEKEKPETSGDL) the composition is skewed to basic and acidic residues.

The protein belongs to the universal ribosomal protein uL3 family. In terms of assembly, component of the large ribosomal subunit in striated muscle cells.

Its function is as follows. Heart- and skeletal muscle-specific component of the ribosome, which regulates muscle function. Component of the large ribosomal subunit in striated muscle cells: replaces the RPL3 paralog in the ribosome in these cells. The ribosome is a large ribonucleoprotein complex responsible for the synthesis of proteins in the cell. Inhibits myotube growth and muscle function. This chain is Large ribosomal subunit protein uL3-like (RPL3L), found in Bos taurus (Bovine).